A 116-amino-acid polypeptide reads, in one-letter code: Large ribosomal subunit protein P2 (116 aa).

The interval 60–116 (GKLSSMPSGGGVAAAAGGGGAAAGGGGAAPAAEEKKEEKKEESEEESDDDMGFGLFD) is disordered. Residues 67–87 (SGGGVAAAAGGGGAAAGGGGA) are compositionally biased toward gly residues. The segment covering 91–101 (AEEKKEEKKEE) has biased composition (basic and acidic residues).

Belongs to the eukaryotic ribosomal protein P1/P2 family. P1 and P2 exist as dimers at the large ribosomal subunit. Phosphorylated.

Its function is as follows. Plays an important role in the elongation step of protein synthesis. The chain is Large ribosomal subunit protein P2 from Branchiostoma floridae (Florida lancelet).